Here is a 290-residue protein sequence, read N- to C-terminus: Probable branched-chain-amino-acid aminotransferase (290 aa).

K155 bears the N6-(pyridoxal phosphate)lysine mark.

The protein belongs to the class-IV pyridoxal-phosphate-dependent aminotransferase family. It depends on pyridoxal 5'-phosphate as a cofactor.

It carries out the reaction L-leucine + 2-oxoglutarate = 4-methyl-2-oxopentanoate + L-glutamate. The enzyme catalyses L-isoleucine + 2-oxoglutarate = (S)-3-methyl-2-oxopentanoate + L-glutamate. It catalyses the reaction L-valine + 2-oxoglutarate = 3-methyl-2-oxobutanoate + L-glutamate. It participates in amino-acid biosynthesis; L-isoleucine biosynthesis; L-isoleucine from 2-oxobutanoate: step 4/4. Its pathway is amino-acid biosynthesis; L-leucine biosynthesis; L-leucine from 3-methyl-2-oxobutanoate: step 4/4. The protein operates within amino-acid biosynthesis; L-valine biosynthesis; L-valine from pyruvate: step 4/4. Its function is as follows. Acts on leucine, isoleucine and valine. The polypeptide is Probable branched-chain-amino-acid aminotransferase (ilvE) (Rickettsia conorii (strain ATCC VR-613 / Malish 7)).